The chain runs to 350 residues: MSEQIPKTQKAVVFDTNGGQLVYKDYPVPTPKPNELLIHVKYSGVCHTDLHARKGDWPLATKLPLVGGHEGAGVVVGMGENVKGWKIGDFAGIKWLNGSCMSCEFCQQGAEPNCGEADLSGYTHDGSFEQYATADAVQAAKIPAGTDLANVAPILCAGVTVYKALKTADLAAGQWVAISGAGGGLGSLAVQYARAMGLRVVAIDGGDEKGEFVKSLGAEAYVDFTKDKDIVEAVKKATDGGPHGAINVSVSEKAIDQSVEYVRPLGKVVLVGLPAHAKVTAPVFDAVVKSIEIKGSYVGNRKDTAEAIDFFSRGLIKCPIKIVGLSDLPEVFKLMEEGKILGRYVLDTSK.

Zn(2+)-binding residues include Cys46, His69, Cys100, Cys103, Cys106, Cys114, and Cys156. NAD(+) contacts are provided by residues 180 to 186 (GAGGGLG), Asp204, Lys209, 271 to 273 (VGL), and Arg343.

The protein belongs to the zinc-containing alcohol dehydrogenase family. Homotetramer. The cofactor is Zn(2+).

It localises to the cytoplasm. It carries out the reaction a primary alcohol + NAD(+) = an aldehyde + NADH + H(+). The catalysed reaction is a secondary alcohol + NAD(+) = a ketone + NADH + H(+). The sequence is that of Alcohol dehydrogenase 1 (ADH1) from Candida albicans (Yeast).